The sequence spans 303 residues: MKQTLIIGTRASKLALVQTYMVRDALQSAHPGLTVAVEHITTRGDIILDRPLNAIGDKGLFVVEIEEAMRAGRIDLAVHSAKDLPSVLPPDMTLAACPRRADPRDALVAQPGMTLAALPSGARVGTSSLRRACQLRALRPDLTLVDLRGNVDTRLRKLREGQYDAIVLAAAGLKRLGLDGAISELIEPDVLIPAVGQGVIGVEARADDEEVLRLLAPLDDQAARIAITAERAFLARIGGGCQVPVGALAHLEGDELLLRGMIGARDGRMVRGMQRGSASDPVGLGCALADELLDQGGRALLAG.

C241 carries the S-(dipyrrolylmethanemethyl)cysteine modification.

The protein belongs to the HMBS family. As to quaternary structure, monomer. Dipyrromethane serves as cofactor.

It catalyses the reaction 4 porphobilinogen + H2O = hydroxymethylbilane + 4 NH4(+). Its pathway is porphyrin-containing compound metabolism; protoporphyrin-IX biosynthesis; coproporphyrinogen-III from 5-aminolevulinate: step 2/4. The protein operates within porphyrin-containing compound metabolism; chlorophyll biosynthesis. Tetrapolymerization of the monopyrrole PBG into the hydroxymethylbilane pre-uroporphyrinogen in several discrete steps. The polypeptide is Porphobilinogen deaminase (Roseiflexus sp. (strain RS-1)).